Reading from the N-terminus, the 505-residue chain is L-carnitine/gamma-butyrobetaine antiporter (505 aa).

12 helical membrane passes run 10–30, 51–71, 92–112, 143–163, 195–215, 231–251, 263–283, 316–336, 347–367, 403–423, 446–466, and 475–495; these read IEPK…WLTV, WGWA…WLVF, IFMM…SIEI, GPLP…FFFV, FYLV…TPLV, LDAI…ACGL, SYLS…SFIM, WTVF…IFLA, LCFG…TVLG, LSTA…VTLI, LLVR…LLAL, and AIIA…LSFI.

The protein belongs to the BCCT transporter (TC 2.A.15) family. CaiT subfamily. As to quaternary structure, homotrimer.

It is found in the cell inner membrane. The enzyme catalyses 4-(trimethylamino)butanoate(in) + (R)-carnitine(out) = 4-(trimethylamino)butanoate(out) + (R)-carnitine(in). It functions in the pathway amine and polyamine metabolism; carnitine metabolism. In terms of biological role, catalyzes the exchange of L-carnitine for gamma-butyrobetaine. The sequence is that of L-carnitine/gamma-butyrobetaine antiporter from Salmonella gallinarum (strain 287/91 / NCTC 13346).